The primary structure comprises 136 residues: MLATRNRLRTSADFSTTVRSGVRNGRRNVVLYTAAIAAGEPSRIGFIVSKSVGNAVVRNLVKRRLREAGAASLREHGTGLAIVVRALPASASASWDQLREDYDAALESTLNRLAGRPQRAAAKGSAGTTQKGTPRA.

The segment at arginine 116–alanine 136 is disordered. Residues alanine 126–alanine 136 show a composition bias toward polar residues.

This sequence belongs to the RnpA family. In terms of assembly, consists of a catalytic RNA component (M1 or rnpB) and a protein subunit.

It carries out the reaction Endonucleolytic cleavage of RNA, removing 5'-extranucleotides from tRNA precursor.. In terms of biological role, RNaseP catalyzes the removal of the 5'-leader sequence from pre-tRNA to produce the mature 5'-terminus. It can also cleave other RNA substrates such as 4.5S RNA. The protein component plays an auxiliary but essential role in vivo by binding to the 5'-leader sequence and broadening the substrate specificity of the ribozyme. This is Ribonuclease P protein component from Pseudarthrobacter chlorophenolicus (strain ATCC 700700 / DSM 12829 / CIP 107037 / JCM 12360 / KCTC 9906 / NCIMB 13794 / A6) (Arthrobacter chlorophenolicus).